Reading from the N-terminus, the 227-residue chain is ATP synthase F(0) complex subunit a (227 aa).

The next 6 helical transmembrane spans lie at 14–34, 73–93, 98–118, 137–157, 179–199, and 203–223; these read FLGI…IPTP, LASL…PYIF, QLSL…LIGM, ALIP…PLAL, VFVL…LLLL, and LEVA…SLYL.

This sequence belongs to the ATPase A chain family. In terms of assembly, component of the ATP synthase complex composed at least of ATP5F1A/subunit alpha, ATP5F1B/subunit beta, ATP5MC1/subunit c (homooctomer), MT-ATP6/subunit a, MT-ATP8/subunit 8, ATP5ME/subunit e, ATP5MF/subunit f, ATP5MG/subunit g, ATP5MK/subunit k, ATP5MJ/subunit j, ATP5F1C/subunit gamma, ATP5F1D/subunit delta, ATP5F1E/subunit epsilon, ATP5PF/subunit F6, ATP5PB/subunit b, ATP5PD/subunit d, ATP5PO/subunit OSCP. ATP synthase complex consists of a soluble F(1) head domain (subunits alpha(3) and beta(3)) - the catalytic core - and a membrane F(0) domain - the membrane proton channel (subunits c, a, 8, e, f, g, k and j). These two domains are linked by a central stalk (subunits gamma, delta, and epsilon) rotating inside the F1 region and a stationary peripheral stalk (subunits F6, b, d, and OSCP). Interacts with DNAJC30; interaction is direct.

It localises to the mitochondrion inner membrane. The enzyme catalyses H(+)(in) = H(+)(out). Its function is as follows. Subunit a, of the mitochondrial membrane ATP synthase complex (F(1)F(0) ATP synthase or Complex V) that produces ATP from ADP in the presence of a proton gradient across the membrane which is generated by electron transport complexes of the respiratory chain. ATP synthase complex consist of a soluble F(1) head domain - the catalytic core - and a membrane F(1) domain - the membrane proton channel. These two domains are linked by a central stalk rotating inside the F(1) region and a stationary peripheral stalk. During catalysis, ATP synthesis in the catalytic domain of F(1) is coupled via a rotary mechanism of the central stalk subunits to proton translocation. With the subunit c (ATP5MC1), forms the proton-conducting channel in the F(0) domain, that contains two crucial half-channels (inlet and outlet) that facilitate proton movement from the mitochondrial intermembrane space (IMS) into the matrix. Protons are taken up via the inlet half-channel and released through the outlet half-channel, following a Grotthuss mechanism. The sequence is that of ATP synthase F(0) complex subunit a from Gadus morhua (Atlantic cod).